We begin with the raw amino-acid sequence, 307 residues long: Homoserine kinase (307 aa).

An ATP-binding site is contributed by 92 to 102 (PLARGLGSSAT).

It belongs to the GHMP kinase family. Homoserine kinase subfamily.

It is found in the cytoplasm. The enzyme catalyses L-homoserine + ATP = O-phospho-L-homoserine + ADP + H(+). It functions in the pathway amino-acid biosynthesis; L-threonine biosynthesis; L-threonine from L-aspartate: step 4/5. Its function is as follows. Catalyzes the ATP-dependent phosphorylation of L-homoserine to L-homoserine phosphate. This is Homoserine kinase (thrB) from Microchaete diplosiphon (Fremyella diplosiphon).